Consider the following 126-residue polypeptide: Protein ApaG (126 aa).

Positions 2-126 (KQLESSIRIE…FRLAAPGLLH (125 aa)) constitute an ApaG domain.

The chain is Protein ApaG from Shewanella loihica (strain ATCC BAA-1088 / PV-4).